Consider the following 1196-residue polypeptide: MGVQGLWKLLECSGRPINPGTLEGKILAVDISIWLNQAVKGARDRQGNAIQNAHLLTLFHRLCKLLFFRIRPIFVFDGEAPLLKRQTLAKRRQRTDKASNDARKTNEKLLRTFLKRQAIKAALSGNKQSNEELPSFSQVPRKETEDLYILPPLEDNENNSSEEEEEREWEERMNQKQRLQEDFFANPSSVDIESEEFKSLPPEVKHEILTDMKDFTKRRRTLFEAMPEDSSDFSQYQLKGLLKKNDLNKCIDNVRKELNQQYSGEVQAQFESEGGFLKEVETRRLVSEDDSHYILIKGIQSKQEEKKVDSPPQSITFNSSQTPKTYLDLKLASAHKTKPLQTSSAEAAPPSPRTLFAIQEAMAESWDHEKHEKPSVSGCEAEGNVSPRTLQAIYQVLAEDEAGESNKIKVVLQSDEERKPKTKVLVISSSDEEDDCLNYQDGTKTTLGASLIKSISPSSMQCQESTADSLPNYTRSKPVSQIEEPMADHNLQGDNCNVPNAKDKLIVPPSLGNVDKPIILSNTIPVNSEFRIPLLPVNMSMRETVIIPNNTGSLGSSRYISLERDATKQGFSDNPVGDLVRSPDEPALNASSALSDRKTSATQSLLCNNIECTEQSMVQGCSNTLDVTQTTQPSGGSEVNKPAEYNPQDKKVFGSNDSSAMYVPMTPESIIVSDEEFVNEKEDSDSDDSFIEVDSEFSTSNSQHVVFKEPGDTRETATNFQAVEEGNSGSQDIPLEHDSGEPHEQSNSEESKDLDDVSNEWQDISVEELESLENNLYVQQTSLQAQQQQQERIAATVTGQMCLESQELLQLFGIPYIVAPMEAEAQCAILDLTDQTSGTITDDSDIWLFGARHVYKNFFSQNKHVEYYQYADIHNQLGLDRSKLINLAYLLGSDYTEGIPTVGYVSAMEILNEFPGQGLEPLVKFKEWWSEAQKDKKMRPNPNDTKVKKKLRLLDLQQSFPNPAVASAYLKPVVDESKSAFSWGRPDLEQIREFCESRFGWYRLKTDEVLLPVLKQLNAQQTQLRIDSFFRLEQHEAAGLKSQRLRRAVTCMKRKERDVEAEEVEAAVAVMERECTNQRKGQKTNTKSQGTKRRKPTECSQEDQDPGGGFIGIELKTLSSKAYSSDGSSSDAEDLPSGLIDKQSQSGIVGRQKASNKVESSSSSDDEDRTVMVTAKPVFQGKKTKSKTMKETVKRK.

Residues 1–78 (MGVQGLWKLL…RIRPIFVFDG (78 aa)) form an N-domain region. D30 contributes to the Mg(2+) binding site. The interval 31–67 (ISIWLNQAVKGARDRQGNAIQNAHLLTLFHRLCKLLF) is DNA-binding; may bind to the undamaged single-strand DNA of the DNA repair bubble. A Mg(2+)-binding site is contributed by D77. The spacer region stretch occupies residues 79–818 (EAPLLKRQTL…LQLFGIPYIV (740 aa)). Disordered regions lie at residues 152-176 (PLED…MNQK), 302-321 (KQEE…NSSQ), 629-661 (QTTQ…SSAM), and 722-758 (AVEE…DDVS). The segment covering 154-168 (EDNENNSSEEEEERE) has biased composition (acidic residues). Over residues 311-321 (PPQSITFNSSQ) the composition is skewed to polar residues. A compositionally biased stretch (polar residues) spans 722-731 (AVEEGNSGSQ). Over residues 734-755 (PLEHDSGEPHEQSNSEESKDLD) the composition is skewed to basic and acidic residues. The tract at residues 819 to 914 (APMEAEAQCA…VSAMEILNEF (96 aa)) is I-domain. E822, E824, D843, and D845 together coordinate Mg(2+). Positions 853–869 (HVYKNFFSQNKHVEYYQ) are DNA-binding; may bind to the undamaged single-strand DNA of the DNA repair bubble. Residues 881 to 913 (RSKLINLAYLLGSDYTEGIPTVGYVSAMEILNE) form a DNA-binding; H2TH (helix-2turn-helix) motif which binds double-stranded DNA region. A Mg(2+)-binding site is contributed by D894. A DNA-binding; may bind double-stranded DNA region spans residues 945 to 951 (TKVKKKL). Positions 1075–1196 (CTNQRKGQKT…KTMKETVKRK (122 aa)) are disordered. Residues 1079–1095 (RKGQKTNTKSQGTKRRK) carry the Nuclear localization signal 1 motif. Residues 1119-1130 (SSKAYSSDGSSS) are compositionally biased toward low complexity. Polar residues predominate over residues 1142-1158 (KQSQSGIVGRQKASNKV). The Nuclear localization signal 2 signature appears at 1179–1196 (FQGKKTKSKTMKETVKRK).

Belongs to the XPG/RAD2 endonuclease family. XPG subfamily. In terms of assembly, monomer. Homodimer. It depends on Mg(2+) as a cofactor.

The protein localises to the nucleus. It is found in the chromosome. Single-stranded structure-specific DNA endonuclease involved in DNA excision repair. Makes the 3'incision in DNA nucleotide excision repair (NER). Binds and bends DNA repair bubble substrate and breaks base stacking at the single-strand/double-strand DNA junction of the DNA bubble. Plays a role in base excision repair (BER) by promoting the binding of DNA glycosylase to its substrate and increasing DNA glycosylase catalytic activity that removes oxidized pyrimidines from DNA. Involved in transcription-coupled nucleotide excision repair (TCR) which allows RNA polymerase II-blocking lesions to be rapidly removed from the transcribed strand of active genes. Required for DNA replication fork maintenance and preservation of genomic stability. Involved in homologous recombination repair (HRR) induced by DNA replication stress. During HRR, binds to the replication fork with high specificity and stabilizes it. The polypeptide is DNA excision repair protein ERCC-5 homolog (ercc5) (Xenopus laevis (African clawed frog)).